The following is a 500-amino-acid chain: MTIFDNYEVWFVIGSQHLYGAETLRQVTQHAEHVVNALNTEAKLPCKLVLKPLGTSPDEITAICRDANYDDRCAGLVVWLHTFSPAKMWINGLSILNKPLLQFHTQFNAALPWDSIDMDFMNLNQTAHGGREFGFIGARMRQQHAVVTGHWQDKEAHTRIGAWMRQAVSKQDTRQLKVCRFGDNMREVAVTDGDKVAAQIKFGFSVNTWAVGDLVQVVNSIGDGDINALIDEYESSYTLTPATQIHGDKRQNVREAARIELGMKRFLEQGGFHAFTTTFEDLHGLKQLPGLAVQRLMQQGYGFAGEGDWKTAALLRIMKVMSTGLQGGTSFMEDYTYHFEKGNDLVLGSHMLEVCPSIAVEEKPILDVQHLGIGGKEDPARLIFNTQTGPAIVASLIDLGDRYRLLVNCIDTVKTPHSLPKLPVANALWKAQPDLPTASEAWILAGGAHHTVFSHALDLNDMRQFAEIHDIEIAVIDNDTHLPAFKDALRWNEVYYGFKR.

Mn(2+)-binding residues include glutamate 306, glutamate 333, histidine 350, and histidine 450.

It belongs to the arabinose isomerase family. As to quaternary structure, homohexamer. The cofactor is Mn(2+).

The catalysed reaction is beta-L-arabinopyranose = L-ribulose. It participates in carbohydrate degradation; L-arabinose degradation via L-ribulose; D-xylulose 5-phosphate from L-arabinose (bacterial route): step 1/3. Functionally, catalyzes the conversion of L-arabinose to L-ribulose. This is L-arabinose isomerase from Salmonella newport (strain SL254).